Here is a 315-residue protein sequence, read N- to C-terminus: Secreted mono- and diacylglycerol lipase LIP2 (315 aa).

Residues 1 to 21 form the signal peptide; that stretch reads MACFRVILYLSVIFFVQCVFA. Cys-68 and Cys-308 are oxidised to a cystine. The N-linked (GlcNAc...) asparagine glycan is linked to Asn-74. Ser-182 serves as the catalytic Nucleophile. The active site involves Asp-240. N-linked (GlcNAc...) asparagine glycosylation occurs at Asn-265. His-292 is an active-site residue.

Belongs to the AB hydrolase superfamily. Lipase family. Class 3 subfamily.

The protein localises to the secreted. The catalysed reaction is a monoacylglycerol + H2O = glycerol + a fatty acid + H(+). It carries out the reaction a diacylglycerol + H2O = a monoacylglycerol + a fatty acid + H(+). In terms of biological role, secreted lipase involved in Dandruff and seborrheic dermatitis (D/SD) probably via lipase-mediated breakdown of sebaceous lipids and release of irritating free fatty acids. Shows activity against monoglyceride and diglyceride substrates and generates free oleic acid from the substrates mono- and diolein. Able to cleave the oleic acid from both the 1 and the 2 position of the glycerol backbone as 1,2 isomers of diolein were converted into oleic acid and glycerol. Due to an absence of fatty acid synthase genes in Malassezia species, secretory lipases are essential for the yeast to generate free fatty acids from degradation of sebum and assimilate them as lipid sources for growth. Plays an essential role at the pathogen-host interface during disease progression. Also performs the reverse reaction to build diacylglycerols from monoacylglycerols. In Malassezia restricta (strain ATCC 96810 / NBRC 103918 / CBS 7877) (Seborrheic dermatitis infection agent), this protein is Secreted mono- and diacylglycerol lipase LIP2.